The primary structure comprises 152 residues: Large ribosomal subunit protein bL9 (152 aa).

This sequence belongs to the bacterial ribosomal protein bL9 family.

Binds to the 23S rRNA. The chain is Large ribosomal subunit protein bL9 from Prochlorococcus marinus (strain NATL2A).